We begin with the raw amino-acid sequence, 27 residues long: Histone H1.3, embryonic (27 aa).

The H15 domain occupies 1-27; sequence HVVAAITALKERGGSSHQALKKYKAAN.

It belongs to the histone H1/H5 family.

The protein resides in the nucleus. Its subcellular location is the chromosome. Its function is as follows. Histones H1 are necessary for the condensation of nucleosome chains into higher-order structures. The sequence is that of Histone H1.3, embryonic from Parechinus angulosus (Angulate sea urchin).